The following is a 298-amino-acid chain: Methylsterol monooxygenase 1-1 (298 aa).

3 helical membrane-spanning segments follow: residues 42–62 (ILFL…VELA), 96–116 (FILV…MIEI), and 118–138 (SGLP…YFLI). In terms of domain architecture, Fatty acid hydroxylase spans 132 to 267 (LVVYFLIEDY…FTYCDYIYGT (136 aa)). Positions 147 to 151 (HRFFH) match the Histidine box-1 motif. A Histidine box-2 motif is present at residues 160-164 (HRVHH). A helical membrane pass occupies residues 189-209 (TFMGPAIAPGHMITFWLWIAL). The Histidine box-3 signature appears at 239 to 245 (YHDYHHY).

Belongs to the sterol desaturase family. In terms of assembly, interacts with ACBP1. It depends on Fe cation as a cofactor. As to expression, expressed in rosettes, stems, roots, floral buds, flowers and siliques.

The protein localises to the endoplasmic reticulum membrane. It catalyses the reaction 4,4-dimethyl-5alpha-cholest-7-en-3beta-ol + 6 Fe(II)-[cytochrome b5] + 3 O2 + 5 H(+) = 4alpha-carboxy-4beta-methyl-5alpha-cholest-7-ene-3beta-ol + 6 Fe(III)-[cytochrome b5] + 4 H2O. The enzyme catalyses 24-methylenecycloartanol + 6 Fe(II)-[cytochrome b5] + 3 O2 + 5 H(+) = 4alpha-carboxy-4beta,14alpha-dimethyl-9beta,19-cyclo-5alpha-ergost-24(24(1))-en-3beta-ol + 6 Fe(III)-[cytochrome b5] + 4 H2O. Non-heme iron oxygenase involved in sterols biosynthesis by catalyzing the removal of the first methyl group at the C-4 position. 4,4-dimethyl-9-beta,19-cyclopropylsterols such as 24-methylenecycloartanol are the preferred substrates. Acts as a rate-limiting enzyme in the sterol pathway via interaction with ACBP1; sterols serve as lipid modulators for gene expression of homeodomain-leucine zipper IV transcription factors. Together with SMO1-2, involved in the maintenance of sterol composition to balance auxin and cytokinin activities during embryogenesis. This Arabidopsis thaliana (Mouse-ear cress) protein is Methylsterol monooxygenase 1-1.